The primary structure comprises 634 residues: Chaperone protein dnaK2 (634 aa).

The residue at position 197 (T197) is a Phosphothreonine; by autocatalysis. The segment at 592 to 634 (IGSSVYQQPGNQPPAPGTPDSNESNDKGGDDDVIDADFTETKD) is disordered. The span at 622–634 (DDVIDADFTETKD) shows a compositional bias: acidic residues.

It belongs to the heat shock protein 70 family.

Acts as a chaperone. This is Chaperone protein dnaK2 (dnaK2) from Prochlorococcus marinus subsp. pastoris (strain CCMP1986 / NIES-2087 / MED4).